The primary structure comprises 285 residues: tRNA uridine(34) hydroxylase (285 aa).

Residues 130–225 enclose the Rhodanese domain; that stretch reads RGDDVVFFDG…YGEAFGDTGL (96 aa). Cysteine 185 serves as the catalytic Cysteine persulfide intermediate.

Belongs to the TrhO family.

It catalyses the reaction uridine(34) in tRNA + AH2 + O2 = 5-hydroxyuridine(34) in tRNA + A + H2O. In terms of biological role, catalyzes oxygen-dependent 5-hydroxyuridine (ho5U) modification at position 34 in tRNAs. This is tRNA uridine(34) hydroxylase from Rhodococcus opacus (strain B4).